The chain runs to 366 residues: Mitogen-activated protein kinase 13 (366 aa).

Residues 25–308 (YLAPAHVGSG…AAQALAHPFF (284 aa)) enclose the Protein kinase domain. ATP is bound by residues 31–39 (VGSGAYGAV) and Lys54. Asp150 (proton acceptor) is an active-site residue. A Phosphothreonine; by MAP2K3, MAP2K4, MAP2K6 and MAP2K7 modification is found at Thr180. Residues 180 to 182 (TGY) carry the TXY motif. Phosphotyrosine is present on Tyr182. Ser350 carries the post-translational modification Phosphoserine.

It belongs to the protein kinase superfamily. CMGC Ser/Thr protein kinase family. MAP kinase subfamily. As to quaternary structure, interacts with MAPK8IP2. Mg(2+) is required as a cofactor. Dually phosphorylated on Thr-180 and Tyr-182 by MAP2K3/MKK3, MAP2K4/MKK4, MAP2K6/MKK6 and MAP2K7/MKK7, which activates the enzyme. Dephosphorylated by dual specificity phosphatase DUSP1.

The enzyme catalyses L-seryl-[protein] + ATP = O-phospho-L-seryl-[protein] + ADP + H(+). The catalysed reaction is L-threonyl-[protein] + ATP = O-phospho-L-threonyl-[protein] + ADP + H(+). Its activity is regulated as follows. Activated by phosphorylation on threonine and tyrosine by dual specificity kinases, MAP2K3/MKK3, MAP2K6/MKK6, MAP2K4/MKK4 and MAP2K7/MKK7. Activation by ultraviolet radiation, hyperosmotic shock, anisomycin or by TNF-alpha is mediated by MAP2K3/MKK3. Inhibited by dual specificity phosphatase DUSP1. In terms of biological role, serine/threonine kinase which acts as an essential component of the MAP kinase signal transduction pathway. MAPK13 is one of the four p38 MAPKs which play an important role in the cascades of cellular responses evoked by extracellular stimuli such as pro-inflammatory cytokines or physical stress leading to direct activation of transcription factors such as ELK1 and ATF2. Accordingly, p38 MAPKs phosphorylate a broad range of proteins and it has been estimated that they may have approximately 200 to 300 substrates each. MAPK13 is one of the less studied p38 MAPK isoforms. Some of the targets are downstream kinases such as MAPKAPK2, which are activated through phosphorylation and further phosphorylate additional targets. Plays a role in the regulation of protein translation by phosphorylating and inactivating EEF2K. Involved in cytoskeletal remodeling through phosphorylation of MAPT and STMN1. Mediates UV irradiation induced up-regulation of the gene expression of CXCL14. Plays an important role in the regulation of epidermal keratinocyte differentiation, apoptosis and skin tumor development. Phosphorylates the transcriptional activator MYB in response to stress which leads to rapid MYB degradation via a proteasome-dependent pathway. MAPK13 also phosphorylates and down-regulates PRKD1 during regulation of insulin secretion in pancreatic beta cells. The chain is Mitogen-activated protein kinase 13 (Mapk13) from Mus musculus (Mouse).